The primary structure comprises 309 residues: Probable 2,4-dienoyl-CoA reductase decr-1.2 [(3E)-enoyl-CoA-producing] (309 aa).

Residues 28-60 (VLVT…RRME), 32-37 (GGGTGI), arginine 57, and aspartate 83 each bind NADP(+). Arginine 57 contacts substrate. Substrate-binding residues include phenylalanine 116 and serine 124. Tyrosine 166 serves as the catalytic Proton acceptor. Residues lysine 181 and 207 to 210 (PGPI) each bind NADP(+). Arginine 218 contacts substrate.

It belongs to the short-chain dehydrogenases/reductases (SDR) family. 2,4-dienoyl-CoA reductase subfamily.

It carries out the reaction a (2E,4E)-dienoyl-CoA + NADPH + H(+) = a 4,5-saturated-(3E)-enoyl-CoA + NADP(+). The enzyme catalyses a (2E,4Z)-dienoyl-CoA + NADPH + H(+) = a 4,5-saturated-(3E)-enoyl-CoA + NADP(+). Its function is as follows. Auxiliary enzyme of beta-oxidation. It participates in the metabolism of unsaturated fatty enoyl-CoA esters having double bonds in both even- and odd-numbered positions. Catalyzes the NADP-dependent reduction of 2,4-dienoyl-CoA to yield trans-3-enoyl-CoA. This Caenorhabditis elegans protein is Probable 2,4-dienoyl-CoA reductase decr-1.2 [(3E)-enoyl-CoA-producing].